The sequence spans 338 residues: Heat shock factor 2-binding protein (338 aa).

A disordered region spans residues 1-20 (MAATVGDGSGTEEACRNMES). The stretch at 12 to 126 (EEACRNMESK…LLQQAEYCTQ (115 aa)) forms a coiled coil. The interval 18-55 (MESKEEFVKVRKKDLERLTTEVMQIRDFLPRILNGELL) is interaction with BRME1. Positions 87–338 (ARLETAQADS…EDLRALDCNV (252 aa)) are interaction with BRCA2.

Interacts (via C-terminus) with BNC1. Associates with HSF2. The interaction seems to occur between the trimerization domain of HSF2 and the N-terminal hydrophilic region of HSF2BP. Interacts (via N-terminus) with BRME1. Interacts with BRCA2 and BRME1; the interactions are direct and allow the formation of a ternary complex. The complex BRME1:HSF2BP:BRCA2 interacts with SPATA22, MEIOB and RAD51. Sumoylated by UBE2I in response to MEKK1-mediated stimuli. In terms of tissue distribution, expressed in testis and, to a lesser extent, in lung and muscle.

It is found in the cytoplasm. The protein localises to the chromosome. Functionally, meiotic recombination factor component of recombination bridges involved in meiotic double-strand break repair. Modulates the localization of recombinases DMC1:RAD51 to meiotic double-strand break (DSB) sites through the interaction with BRCA2 and its recruitment during meiotic recombination. Indispensable for the DSB repair, homologous synapsis, and crossover formation that are needed for progression past metaphase I, is essential for spermatogenesis and male fertility. Required for proper recombinase recruitment in female meiosis. Inhibits BNC1 transcriptional activity during spermatogenesis, probably by sequestering it in the cytoplasm. May be involved in modulating HSF2 activation in testis. The sequence is that of Heat shock factor 2-binding protein from Mus musculus (Mouse).